Here is a 160-residue protein sequence, read N- to C-terminus: Siroheme decarboxylase NirH subunit (160 aa).

Belongs to the Ahb/Nir family. Forms a complex composed of NirDL, NirG and NirH. All proteins are required for the total conversion of siroheme to didecarboxysiroheme.

It carries out the reaction siroheme + 2 H(+) = 12,18-didecarboxysiroheme + 2 CO2. The protein operates within porphyrin-containing compound metabolism. Its function is as follows. Involved in heme d1 biosynthesis. Catalyzes the decarboxylation of siroheme into didecarboxysiroheme. Siroheme is probably decarboxylated to monodecarboxysiroheme, which is in turn decarboxylated to didecarboxysiroheme. The chain is Siroheme decarboxylase NirH subunit from Paracoccus pantotrophus (Thiosphaera pantotropha).